Here is a 233-residue protein sequence, read N- to C-terminus: MSVISMKQLLEAGVHFGHQTRRWNPKMAPYIFTERNGIYIIDLQKTVRKAEEAYNFIKEVSTEGKDILFVGTKKQAQDAIKDEAIRSSMHFVNNRWLGGMLTNFSTIKKRIRRLSEIETMQEDGTFEVLPKKEVIKLKGELEKLEKNLGGIKNLDCDNIGAMFVVDPRKEKNAISEAKILGIPVVAIVDTNCDPEEVDYVIPGNDDAIRAVKLITAKMADAIMEGRQGEELAE.

The protein belongs to the universal ribosomal protein uS2 family.

In Clostridium botulinum (strain Eklund 17B / Type B), this protein is Small ribosomal subunit protein uS2.